The chain runs to 392 residues: Tyrosine--tRNA ligase (392 aa).

The short motif at 39–48 (PTAPDIHIGH) is the 'HIGH' region element. The short motif at 223 to 227 (KMSKS) is the 'KMSKS' region element. Lys226 serves as a coordination point for ATP. Residues 331-391 (IGIAQLLKQA…GKRRFARVVL (61 aa)) enclose the S4 RNA-binding domain.

This sequence belongs to the class-I aminoacyl-tRNA synthetase family. TyrS type 2 subfamily. In terms of assembly, homodimer.

It is found in the cytoplasm. The enzyme catalyses tRNA(Tyr) + L-tyrosine + ATP = L-tyrosyl-tRNA(Tyr) + AMP + diphosphate + H(+). Its function is as follows. Catalyzes the attachment of tyrosine to tRNA(Tyr) in a two-step reaction: tyrosine is first activated by ATP to form Tyr-AMP and then transferred to the acceptor end of tRNA(Tyr). This is Tyrosine--tRNA ligase from Ralstonia nicotianae (strain ATCC BAA-1114 / GMI1000) (Ralstonia solanacearum).